The following is a 197-amino-acid chain: MRFDAADAHWRETPRPGASSAQKDWLTRGGSLTAHLARLGRVTVRVTRETVAAPWADEHRALSCASRAPVWVREVVLAVDGAPFVAAHSIAPLAASKGVWQAMRRLRTRPLAELLYSDPEVTRSALVSRRVLAGHPLFSLASLALARAYATEHAFAARRSVFERRGTPLMVTECMLPALWRHLDAHGERRARGLEQT.

Positions 1–14 are enriched in basic and acidic residues; sequence MRFDAADAHWRETP. The segment at 1–23 is disordered; the sequence is MRFDAADAHWRETPRPGASSAQK. The substrate site is built by R73, L111, and E173.

This sequence belongs to the UbiC family.

Its subcellular location is the cytoplasm. The enzyme catalyses chorismate = 4-hydroxybenzoate + pyruvate. It functions in the pathway cofactor biosynthesis; ubiquinone biosynthesis. Its function is as follows. Removes the pyruvyl group from chorismate, with concomitant aromatization of the ring, to provide 4-hydroxybenzoate (4HB) for the ubiquinone pathway. The polypeptide is Probable chorismate pyruvate-lyase 2 (Burkholderia pseudomallei (strain 1710b)).